The primary structure comprises 480 residues: Aromatic-L-amino-acid decarboxylase (480 aa).

Met1 is modified (N-acetylmethionine). A run of 2 repeats spans residues 58 to 115 (RDIE…TELE) and 118 to 178 (MMDW…TQAA). Residues 58–178 (RDIEKIIMPG…AASPELTQAA (121 aa)) form a 2 X approximate tandem repeats region. Thr82 serves as a coordination point for substrate. 2 residues coordinate pyridoxal 5'-phosphate: Ala148 and Ser149. His192 is a substrate binding site. Positions 246 and 300 each coordinate pyridoxal 5'-phosphate. The residue at position 303 (Lys303) is an N6-(pyridoxal phosphate)lysine.

It belongs to the group II decarboxylase family. In terms of assembly, homodimer. Pyridoxal 5'-phosphate serves as cofactor.

The enzyme catalyses L-dopa + H(+) = dopamine + CO2. It carries out the reaction 5-hydroxy-L-tryptophan + H(+) = serotonin + CO2. The protein operates within catecholamine biosynthesis; dopamine biosynthesis; dopamine from L-tyrosine: step 2/2. Functionally, catalyzes the decarboxylation of L-3,4-dihydroxyphenylalanine (DOPA) to dopamine and L-5-hydroxytryptophan to serotonin. The chain is Aromatic-L-amino-acid decarboxylase from Rattus norvegicus (Rat).